The sequence spans 210 residues: Cytochrome c biogenesis ATP-binding export protein CcmA (210 aa).

Residues 3–205 form the ABC transporter domain; it reads LHLQAAGLAC…KPSGYRELNL (203 aa). 37-44 is an ATP binding site; that stretch reads GPNGSGKT.

Belongs to the ABC transporter superfamily. CcmA exporter (TC 3.A.1.107) family. In terms of assembly, the complex is composed of two ATP-binding proteins (CcmA) and two transmembrane proteins (CcmB).

It is found in the cell inner membrane. It carries out the reaction heme b(in) + ATP + H2O = heme b(out) + ADP + phosphate + H(+). Part of the ABC transporter complex CcmAB involved in the biogenesis of c-type cytochromes; once thought to export heme, this seems not to be the case, but its exact role is uncertain. Responsible for energy coupling to the transport system. The protein is Cytochrome c biogenesis ATP-binding export protein CcmA of Pseudomonas putida (strain ATCC 47054 / DSM 6125 / CFBP 8728 / NCIMB 11950 / KT2440).